The sequence spans 552 residues: Steroid transmembrane transporter SLC22A24 (552 aa).

Helical transmembrane passes span 16–36, 146–166, 174–194, 204–224, 235–255, 260–280, 349–369, 380–400, 407–427, 436–456, 473–493, and 495–515; these read FQILQLAFLCIANILLFPHIL, SVVQSLFMAGSLLGSVIFGYL, MICSWCLLQLAISDTCAAFAP, FLAGSCVMTIMGHSFLLVIEW, TLLLCASSVGQMLLGGLAFVI, TLQLTVSIPIFVIFLSSRWLV, IVLYLGFVRLAVSVPLYGLIF, LFQVLFGAITATARFVALLVM, ISQVLFLLPVGLFILVNTFLD, ILATLGAGVLCIATTSGSVHF, ILFSRIGAALAPLLMIFVGFS, and YLPWITYGVFPILAGLVVLLL.

This sequence belongs to the major facilitator (TC 2.A.1) superfamily. Organic cation transporter (TC 2.A.1.19) family.

The protein localises to the cell membrane. It catalyses the reaction estrone 3-sulfate(out) + glutarate(in) = estrone 3-sulfate(in) + glutarate(out). The enzyme catalyses 17beta-estradiol 17-O-(beta-D-glucuronate)(out) + glutarate(in) = 17beta-estradiol 17-O-(beta-D-glucuronate)(in) + glutarate(out). The catalysed reaction is 5alpha-androstane-3alpha,17beta-diol 3-O-(beta-D-glucuronate)(out) + glutarate(in) = 5alpha-androstane-3alpha,17beta-diol 3-O-(beta-D-glucuronate)(in) + glutarate(out). It carries out the reaction dehydroepiandrosterone 3-sulfate(out) + glutarate(in) = dehydroepiandrosterone 3-sulfate(in) + glutarate(out). It catalyses the reaction glutarate(in) + succinate(out) = glutarate(out) + succinate(in). Renal transmembrane organic anion/dicarboxylate exchanger that participates in the reabsorption of conjugated steroids, as well as bile acids, driven by an outward gradient of dicarboxylates such as glutarate or succinate. Transports androstanediol glucuronide (5alpha-androstane-3alpha,17beta-diol 3-O-(beta-D-glucuronate)), estrone 3-sulfate, and estradiol-17-glucuronide (17beta-estradiol 17-O-(beta-D-glucuronate)), but not taurocholate. This is Steroid transmembrane transporter SLC22A24 from Microcebus murinus (Gray mouse lemur).